A 158-amino-acid polypeptide reads, in one-letter code: NAD(P)H-quinone oxidoreductase subunit J, chloroplastic (158 aa).

The protein belongs to the complex I 30 kDa subunit family. As to quaternary structure, NDH is composed of at least 16 different subunits, 5 of which are encoded in the nucleus.

It is found in the plastid. Its subcellular location is the chloroplast thylakoid membrane. The enzyme catalyses a plastoquinone + NADH + (n+1) H(+)(in) = a plastoquinol + NAD(+) + n H(+)(out). The catalysed reaction is a plastoquinone + NADPH + (n+1) H(+)(in) = a plastoquinol + NADP(+) + n H(+)(out). In terms of biological role, NDH shuttles electrons from NAD(P)H:plastoquinone, via FMN and iron-sulfur (Fe-S) centers, to quinones in the photosynthetic chain and possibly in a chloroplast respiratory chain. The immediate electron acceptor for the enzyme in this species is believed to be plastoquinone. Couples the redox reaction to proton translocation, and thus conserves the redox energy in a proton gradient. The chain is NAD(P)H-quinone oxidoreductase subunit J, chloroplastic from Solanum lycopersicum (Tomato).